We begin with the raw amino-acid sequence, 662 residues long: uncharacterized protein (662 aa).

5 disordered regions span residues 1 to 94 (MSQR…NENN), 107 to 237 (DHNN…VKYH), 288 to 328 (ETTS…TPSA), 406 to 440 (QSSFLNKPTNNTETPTTTTTTTTTTTTTPSQPIQM), and 506 to 580 (QNSI…MVSP). The segment covering 25–49 (TTTTTPTPTTTTTTTSSLSSSTSST) has biased composition (low complexity). Residues 77–87 (DNIKLDNEKTF) are compositionally biased toward basic and acidic residues. A compositionally biased stretch (low complexity) spans 109–161 (NNNNNNNNNNNNNNNNNNNNNNNNNNNNNNNNNNNNNNNNNNNNNNNNNNNNN). Positions 162–176 (DTQKGTNKNENNCTD) are enriched in polar residues. A compositionally biased stretch (low complexity) spans 183–196 (STSTTSSSETGSST). Positions 203 to 212 (KTPQSCLKKS) are enriched in polar residues. A compositionally biased stretch (low complexity) spans 213-224 (NNNNNDNNNNNN). Residues 226–235 (KTPRSTKKVK) show a composition bias toward basic residues. 4 stretches are compositionally biased toward low complexity: residues 288–308 (ETTSVTSTTSTATTTTTTPIP), 413–434 (PTNNTETPTTTTTTTTTTTTTP), 515–526 (PTKSSSSTSIQQ), and 535–575 (NINN…NNNN).

This is an uncharacterized protein from Dictyostelium discoideum (Social amoeba).